The chain runs to 1167 residues: DNA-directed RNA polymerase subunit beta (1167 aa).

This sequence belongs to the RNA polymerase beta chain family. The RNAP catalytic core consists of 2 alpha, 1 beta, 1 beta' and 1 omega subunit. When a sigma factor is associated with the core the holoenzyme is formed, which can initiate transcription.

The enzyme catalyses RNA(n) + a ribonucleoside 5'-triphosphate = RNA(n+1) + diphosphate. Its function is as follows. DNA-dependent RNA polymerase catalyzes the transcription of DNA into RNA using the four ribonucleoside triphosphates as substrates. The polypeptide is DNA-directed RNA polymerase subunit beta (Mycolicibacterium vanbaalenii (strain DSM 7251 / JCM 13017 / BCRC 16820 / KCTC 9966 / NRRL B-24157 / PYR-1) (Mycobacterium vanbaalenii)).